A 639-amino-acid polypeptide reads, in one-letter code: Lipoteichoic acid synthase 1 (639 aa).

Topologically, residues 1 to 3 (MKK) are cytoplasmic. The helical transmembrane segment at 4–24 (LFSYKLSFFVLAVILFWAKTY) threads the bilayer. Over 25-41 (LSYKTEFNLGVKGTTQE) the chain is Extracellular. The chain crosses the membrane as a helical span at residues 42–62 (ILLIFNPFSSAVFFLGLALLA). Over 63–67 (KGRKS) the chain is Cytoplasmic. The helical transmembrane segment at 68–88 (AIIMLIIDFLMTFVLYANILF) threads the bilayer. Topologically, residues 89-116 (YRFFDDFLTFPNIKQSGNVGNMGDGIFS) are extracellular. Residues 117–137 (IMAGHDIFYFLDIIILIAVLI) form a helical membrane-spanning segment. The Cytoplasmic portion of the chain corresponds to 138–150 (WRPELKEYKMKKR). Residues 151-171 (FASLVILSGIALFFINLHYAE) form a helical membrane-spanning segment. The Extracellular segment spans residues 172–639 (KDRPQLLTRT…YHYGKEKEIK (468 aa)). Residues E252 and T297 each coordinate Mn(2+). The active site involves T297. H413 is a substrate binding site. Mn(2+) contacts are provided by D472 and H473.

The protein belongs to the LTA synthase family. Post-translationally, proteolytically cleaved by the type I signal peptidases SipT and SipV.

Its subcellular location is the cell membrane. It localises to the secreted. The protein operates within cell wall biogenesis; lipoteichoic acid biosynthesis. Functionally, catalyzes the polymerization of lipoteichoic acid (LTA) polyglycerol phosphate, a reaction that presumably uses phosphatidylglycerol (PG) as substrate. The polypeptide is Lipoteichoic acid synthase 1 (ltaS1) (Bacillus subtilis (strain 168)).